A 405-amino-acid chain; its full sequence is MRRTPAAERLSELGFPPRRGRQEPPFPLGVTRGWGGWPIEKRREGPRPVPFSERSPEDGREQPAHGSGILWRVRTRLSLCRDPEPPPPPPPLCLLRVSLLCALRAGGRGSRWGEDGAGLLLLPPAGASGSLKAERSSSTPYAGRMLENSGCKALKEGVLEKRSDGLLQLWKKKCCILTEEGLLLIPPKQLQQQQQQQQPGQGTAEPSQPSGPTVASLEPPVKLKELHFSNMKTVDCVERKGKYMYFTVVMTEGKEIDFRCPQDQGWNAEITLQMVQYKNRQAILAVKSTRQKQQHLVQQQPPQTQQIQPQPQPQIQPQPQPQIQPQPQPQPQPQPQPQPQPQPQQLHSYPHPHPHPYSHPHQHPHPHPHPHPHPHPHPYQLQHAHQPLHSQPQGHRLLRSTSNSA.

Basic and acidic residues-rich tracts occupy residues 1–11 (MRRTPAAERLS) and 54–63 (RSPEDGREQP). Disordered regions lie at residues 1–67 (MRRT…AHGS), 189–217 (QLQQQQQQQQPGQGTAEPSQPSGPTVASL), and 293–405 (QQHL…SNSA). One can recognise a PH domain in the interval 153–277 (ALKEGVLEKR…AEITLQMVQY (125 aa)). Residues 189–202 (QLQQQQQQQQPGQG) are compositionally biased toward low complexity. The segment covering 204–213 (AEPSQPSGPT) has biased composition (polar residues). Residues 294–309 (QHLVQQQPPQTQQIQP) show a composition bias toward low complexity. A 16 X 2 AA repeats of P-Q region spans residues 309-344 (PQPQPQIQPQPQPQIQPQPQPQPQPQPQPQPQPQPQ). Pro residues predominate over residues 310–342 (QPQPQIQPQPQPQIQPQPQPQPQPQPQPQPQPQ). The span at 350–376 (PHPHPHPYSHPHQHPHPHPHPHPHPHP) shows a compositional bias: basic residues. An 11 X 2 AA repeats of P-H region spans residues 354–377 (PHPYSHPHQHPHPHPHPHPHPHPH). The segment covering 378–389 (PYQLQHAHQPLH) has biased composition (low complexity).

In terms of assembly, interacts with RPL14, EIF3S7 and PABPC4. In terms of tissue distribution, widely expressed with very high levels in adult liver and high levels in adult lung. According to PubMed:10428057 expressed at low levels in liver. Expressed at increased levels in atherosclerotic lesions observed in hyperhomocysteinema.

The protein resides in the cytoplasm. Its subcellular location is the cytoplasmic vesicle. It is found in the nucleus. The protein localises to the nucleolus. In terms of biological role, seems to be involved in regulation of apoptosis. May be involved in detachment-mediated programmed cell death. May mediate apoptosis during neuronal development. May be involved in regulation of anti-apoptotic effects of IGF1. Required for TCR-induced apoptosis and expression of TNFRSF6/FAS in a T-cell hybridoma cell line. May be involved in translational regulation. In Mus musculus (Mouse), this protein is Pleckstrin homology-like domain family A member 1 (Phlda1).